The primary structure comprises 283 residues: Elongation factor Ts (283 aa).

An involved in Mg(2+) ion dislocation from EF-Tu region spans residues 80–83 (TDFV).

Belongs to the EF-Ts family.

Its subcellular location is the cytoplasm. Functionally, associates with the EF-Tu.GDP complex and induces the exchange of GDP to GTP. It remains bound to the aminoacyl-tRNA.EF-Tu.GTP complex up to the GTP hydrolysis stage on the ribosome. In Haemophilus influenzae (strain PittEE), this protein is Elongation factor Ts.